The chain runs to 1008 residues: Histone deacetylase complex subunit SAP130-A (1008 aa).

Polar residues predominate over residues 1–31; the sequence is MNSQQFPRQAASMPSPQVSNSGASVGQNVQG. Disordered regions lie at residues 1–44, 113–134, 415–435, and 617–720; these read MNSQ…DVQS, SKST…SAVP, IQSD…HRAS, and TPGG…PATI. Residues 35–44 show a composition bias toward basic and acidic residues; that stretch reads EVARDMDVQS. Positions 618 to 644 are enriched in polar residues; that stretch reads PGGTTVMQSHSQSPGIGSSPAQGSSPR. Positions 678–697 are enriched in low complexity; it reads ADQPSAAASLPSSHHPAAAV.

The protein belongs to the SAP130 family.

The protein localises to the nucleus. Acts as a transcriptional repressor. This is Histone deacetylase complex subunit SAP130-A (sap130-a) from Xenopus laevis (African clawed frog).